The chain runs to 509 residues: Maturase K (509 aa).

Belongs to the intron maturase 2 family. MatK subfamily.

It is found in the plastid. Its subcellular location is the chloroplast. Functionally, usually encoded in the trnK tRNA gene intron. Probably assists in splicing its own and other chloroplast group II introns. The polypeptide is Maturase K (Austrocylindropuntia vestita (Cactus)).